A 509-amino-acid chain; its full sequence is Bifunctional purine biosynthesis protein PurH (509 aa).

An MGS-like domain is found at 1–145 (MIKRALISVF…KSFKDVVVIS (145 aa)).

It belongs to the PurH family.

It carries out the reaction (6R)-10-formyltetrahydrofolate + 5-amino-1-(5-phospho-beta-D-ribosyl)imidazole-4-carboxamide = 5-formamido-1-(5-phospho-D-ribosyl)imidazole-4-carboxamide + (6S)-5,6,7,8-tetrahydrofolate. The enzyme catalyses IMP + H2O = 5-formamido-1-(5-phospho-D-ribosyl)imidazole-4-carboxamide. It functions in the pathway purine metabolism; IMP biosynthesis via de novo pathway; 5-formamido-1-(5-phospho-D-ribosyl)imidazole-4-carboxamide from 5-amino-1-(5-phospho-D-ribosyl)imidazole-4-carboxamide (10-formyl THF route): step 1/1. The protein operates within purine metabolism; IMP biosynthesis via de novo pathway; IMP from 5-formamido-1-(5-phospho-D-ribosyl)imidazole-4-carboxamide: step 1/1. This is Bifunctional purine biosynthesis protein PurH from Brachyspira hyodysenteriae (strain ATCC 49526 / WA1).